The sequence spans 87 residues: Small ribosomal subunit protein bS20 (87 aa).

Positions 1 to 26 are disordered; it reads MANTKSALKRIRQTATRTARNRAVTS. Residues 13–23 show a composition bias toward low complexity; it reads QTATRTARNRA.

Belongs to the bacterial ribosomal protein bS20 family.

Functionally, binds directly to 16S ribosomal RNA. The sequence is that of Small ribosomal subunit protein bS20 from Akkermansia muciniphila (strain ATCC BAA-835 / DSM 22959 / JCM 33894 / BCRC 81048 / CCUG 64013 / CIP 107961 / Muc).